The following is a 386-amino-acid chain: MAAVETRVCETDGCSSEAKLQCPTCIKLGIQGSYFCSQECFKGSWATHKLLHKKAKDEKAKREVSSWTVEGDINTDPWAGYRYTGKLRPHYPLMPTRPVPSYIQRPDYADHPLGMSESEQALKGTSQIKLLSSEDIEGMRLVCRLAREVLDVAAGMIKPGVTTEEIDHAVHLACIARNCYPSPLNYYNFPKSCCTSVNEVICHGIPDRRPLQEGDIVNVDITLYRNGYHGDLNETFFVGEVDDGARKLVQTTYECLMQAIDAVKPGVRYRELGNIIQKHAQANGFSVVRSYCGHGIHKLFHTAPNVPHYAKNKAVGVMKSGHVFTIEPMICEGGWQDETWPDGWTAVTRDGKRSAQFEHTLLVTDTGCEILTRRLDSARPHFMSQF.

The residue at position 2 (Ala2) is an N-acetylalanine. The C6H2-type zinc finger occupies 6 to 59 (TRVCETDGCSSEAKLQCPTCIKLGIQGSYFCSQECFKGSWATHKLLHKKAKDEK). The Zn(2+) site is built by Cys9, Cys14, Cys22, Cys25, Cys36, Cys40, His48, and His52. His203 contacts a protein. Zn(2+) contacts are provided by Asp220, Asp231, and His294. A protein is bound at residue His301. Residues Glu327 and Glu358 each contribute to the Zn(2+) site.

Belongs to the peptidase M24A family. Methionine aminopeptidase type 1 subfamily. Associates with the 60S ribosomal subunit of the 80S translational complex. Zn(2+) serves as cofactor. The cofactor is Co(2+). It depends on Mn(2+) as a cofactor. Requires Fe(2+) as cofactor.

It localises to the cytoplasm. It catalyses the reaction Release of N-terminal amino acids, preferentially methionine, from peptides and arylamides.. Its function is as follows. Cotranslationally removes the N-terminal methionine from nascent proteins. The N-terminal methionine is often cleaved when the second residue in the primary sequence is small and uncharged (Met-Ala-, Cys, Gly, Pro, Ser, Thr, or Val). Required for normal progression through the cell cycle. In Homo sapiens (Human), this protein is Methionine aminopeptidase 1 (METAP1).